A 100-amino-acid chain; its full sequence is NADH-quinone oxidoreductase subunit K (100 aa).

3 consecutive transmembrane segments (helical) span residues 4–24 (LQHGLILAAILFILGLTGLVI), 28–48 (LLFMLIGLEIMINASALAFVV), and 60–80 (VMYILAISLAAAEASIGLALL).

Belongs to the complex I subunit 4L family. In terms of assembly, NDH-1 is composed of 13 different subunits. Subunits NuoA, H, J, K, L, M, N constitute the membrane sector of the complex.

It localises to the cell inner membrane. It carries out the reaction a quinone + NADH + 5 H(+)(in) = a quinol + NAD(+) + 4 H(+)(out). In terms of biological role, NDH-1 shuttles electrons from NADH, via FMN and iron-sulfur (Fe-S) centers, to quinones in the respiratory chain. The immediate electron acceptor for the enzyme in this species is believed to be ubiquinone. Couples the redox reaction to proton translocation (for every two electrons transferred, four hydrogen ions are translocated across the cytoplasmic membrane), and thus conserves the redox energy in a proton gradient. The protein is NADH-quinone oxidoreductase subunit K of Shigella sonnei (strain Ss046).